Reading from the N-terminus, the 650-residue chain is MSSQSLYKVSGNIAANALVNNDKYKTMYQESIVNPEGFWREHGKRIDWIKPYTKIKKTSFDDHNLSINWFYDGTLNASANCLDRHLAEHSDRVAIIWEGDNASEQRKITYGELHADVCKFANALRSQGVRRGDIVTIYMPMVPEAAVAMLACARIGAVHSVVFGGFSPDSIASRVIDGKSKVIITSDEGMRGGRAIPLKRNIDDALKNPDVTTVEKVIVLKRTGGKVDWVEGRDVWWHSLMETASEYCQPEEMDAEAPLFLLYTSGSTGNPKGVLHTTGGYMVYASMTHEYVFDYKAGEVYWCTADVGWITGHSYMVYGPLANGATVLIHEGVPNHPSPARLGEMIDRHKVSILYTAPTLIRALMAEGKQHFDKFDGSSLRIMGSVGEPINPEAWRWYHEVIGHEHCPIVDTWWQTETGGILITPLPGATDTKPGSATRPFFGVQPALVDNMGNILEGENEGNLVLLDSWPGQMRTVYGDHERFVLTYFKTFRGMYFTGDGARRDEDGYYWITGRVDDVINVSGHRLGTAEVESALVSHELVAEAAVVGYPHDIKGQGIYAYVTLTRGTEETEELRQELRQWVRKEIGALATPDLIQWATGLPKTRSGKIMRRFLRKIAANEVTNLGDASTLADPAVIETLIESRLNRTE.

CoA contacts are provided by residues 191 to 194 (RGGR), T311, and N335. ATP is bound by residues 387–389 (GEP), 411–416 (DTWWQT), D500, and R515. Position 523 (S523) interacts with CoA. R526 is an ATP binding site. The Mg(2+) site is built by V537, H539, and V542. R584 is a CoA binding site. K609 bears the N6-acetyllysine mark.

The protein belongs to the ATP-dependent AMP-binding enzyme family. Mg(2+) serves as cofactor. Acetylated. Deacetylation by the SIR2-homolog deacetylase activates the enzyme.

It catalyses the reaction acetate + ATP + CoA = acetyl-CoA + AMP + diphosphate. In terms of biological role, catalyzes the conversion of acetate into acetyl-CoA (AcCoA), an essential intermediate at the junction of anabolic and catabolic pathways. AcsA undergoes a two-step reaction. In the first half reaction, AcsA combines acetate with ATP to form acetyl-adenylate (AcAMP) intermediate. In the second half reaction, it can then transfer the acetyl group from AcAMP to the sulfhydryl group of CoA, forming the product AcCoA. This is Acetyl-coenzyme A synthetase from Shewanella baltica (strain OS155 / ATCC BAA-1091).